Consider the following 212-residue polypeptide: Adenylate kinase (212 aa).

Residue 10-15 coordinates ATP; it reads GAGKGT. An NMP region spans residues 30–59; that stretch reads STGDMFRAAMANQTEMGRLAKSYIDKGELV. AMP is bound by residues Thr31, Arg36, 57–59, 86–89, and Gln93; these read ELV and GYPR. The segment at 127-159 is LID; sequence GRIINRKTGETFHKVFNPPVDYKEEDYYQREDD. ATP is bound by residues Arg128 and 137 to 138; that span reads TF. Arg156 and Arg167 together coordinate AMP. An ATP-binding site is contributed by Gln195.

Belongs to the adenylate kinase family. Monomer.

It localises to the cytoplasm. It catalyses the reaction AMP + ATP = 2 ADP. Its pathway is purine metabolism; AMP biosynthesis via salvage pathway; AMP from ADP: step 1/1. Functionally, catalyzes the reversible transfer of the terminal phosphate group between ATP and AMP. Plays an important role in cellular energy homeostasis and in adenine nucleotide metabolism. The polypeptide is Adenylate kinase (Streptococcus agalactiae serotype Ia (strain ATCC 27591 / A909 / CDC SS700)).